A 194-amino-acid polypeptide reads, in one-letter code: uncharacterized protein (194 aa).

The region spanning 2–62 is the HTH tetR-type domain; that stretch reads QGPRERMVVS…CEAVDYAGEH (61 aa). Positions 25 to 44 form a DNA-binding region, H-T-H motif; it reads AISDVLQHSGAPRGSAYHYF.

This is an uncharacterized protein from Mycobacterium tuberculosis (strain CDC 1551 / Oshkosh).